A 183-amino-acid polypeptide reads, in one-letter code: Probable chemoreceptor glutamine deamidase CheD (183 aa).

Belongs to the CheD family.

The enzyme catalyses L-glutaminyl-[protein] + H2O = L-glutamyl-[protein] + NH4(+). Probably deamidates glutamine residues to glutamate on methyl-accepting chemotaxis receptors (MCPs), playing an important role in chemotaxis. In Zymomonas mobilis subsp. mobilis (strain ATCC 31821 / ZM4 / CP4), this protein is Probable chemoreceptor glutamine deamidase CheD.